Here is a 597-residue protein sequence, read N- to C-terminus: Aspartate--tRNA ligase (597 aa).

E180 lines the L-aspartate pocket. The tract at residues 204–207 (QLFK) is aspartate. R226 is a binding site for L-aspartate. Residues 226-228 (RDE) and Q235 contribute to the ATP site. H454 is an L-aspartate binding site. Position 488 (E488) interacts with ATP. An L-aspartate-binding site is contributed by R495. 540-543 (GLDR) contacts ATP.

The protein belongs to the class-II aminoacyl-tRNA synthetase family. Type 1 subfamily. Homodimer.

Its subcellular location is the cytoplasm. It carries out the reaction tRNA(Asp) + L-aspartate + ATP = L-aspartyl-tRNA(Asp) + AMP + diphosphate. In terms of biological role, catalyzes the attachment of L-aspartate to tRNA(Asp) in a two-step reaction: L-aspartate is first activated by ATP to form Asp-AMP and then transferred to the acceptor end of tRNA(Asp). The polypeptide is Aspartate--tRNA ligase (Clostridium perfringens (strain SM101 / Type A)).